A 173-amino-acid polypeptide reads, in one-letter code: Crossover junction endodeoxyribonuclease RuvC (173 aa).

Catalysis depends on residues Asp8, Glu69, and Asp141. Mg(2+) is bound by residues Asp8, Glu69, and Asp141.

This sequence belongs to the RuvC family. In terms of assembly, homodimer which binds Holliday junction (HJ) DNA. The HJ becomes 2-fold symmetrical on binding to RuvC with unstacked arms; it has a different conformation from HJ DNA in complex with RuvA. In the full resolvosome a probable DNA-RuvA(4)-RuvB(12)-RuvC(2) complex forms which resolves the HJ. Mg(2+) serves as cofactor.

It is found in the cytoplasm. It carries out the reaction Endonucleolytic cleavage at a junction such as a reciprocal single-stranded crossover between two homologous DNA duplexes (Holliday junction).. Its function is as follows. The RuvA-RuvB-RuvC complex processes Holliday junction (HJ) DNA during genetic recombination and DNA repair. Endonuclease that resolves HJ intermediates. Cleaves cruciform DNA by making single-stranded nicks across the HJ at symmetrical positions within the homologous arms, yielding a 5'-phosphate and a 3'-hydroxyl group; requires a central core of homology in the junction. The consensus cleavage sequence is 5'-(A/T)TT(C/G)-3'. Cleavage occurs on the 3'-side of the TT dinucleotide at the point of strand exchange. HJ branch migration catalyzed by RuvA-RuvB allows RuvC to scan DNA until it finds its consensus sequence, where it cleaves and resolves the cruciform DNA. This chain is Crossover junction endodeoxyribonuclease RuvC, found in Stenotrophomonas maltophilia (strain K279a).